The chain runs to 285 residues: 2,3,4,5-tetrahydropyridine-2,6-dicarboxylate N-succinyltransferase (285 aa).

The substrate site is built by Arg-111 and Asp-148.

The protein belongs to the transferase hexapeptide repeat family. As to quaternary structure, homotrimer.

It is found in the cytoplasm. The enzyme catalyses (S)-2,3,4,5-tetrahydrodipicolinate + succinyl-CoA + H2O = (S)-2-succinylamino-6-oxoheptanedioate + CoA. It functions in the pathway amino-acid biosynthesis; L-lysine biosynthesis via DAP pathway; LL-2,6-diaminopimelate from (S)-tetrahydrodipicolinate (succinylase route): step 1/3. The sequence is that of 2,3,4,5-tetrahydropyridine-2,6-dicarboxylate N-succinyltransferase from Rhizobium rhizogenes (strain K84 / ATCC BAA-868) (Agrobacterium radiobacter).